A 115-amino-acid chain; its full sequence is Thrombospondin type-1 domain-containing protein 8 (115 aa).

Residues 1-21 (MARTPGALLLAPLLLLQLATP) form the signal peptide. Positions 53–104 (DSILGPWGKWRCLCDLGKQERSREVVGTAPGPVFMDPEKLIQLRPCRQRDCP) constitute a TSP type-1 domain.

The sequence is that of Thrombospondin type-1 domain-containing protein 8 from Homo sapiens (Human).